The chain runs to 275 residues: 6-deoxy-6-sulfo-D-fructose transketolase subunit SqwG (275 aa).

Belongs to the transketolase family. As to quaternary structure, forms a complex with SqwH. Thiamine diphosphate is required as a cofactor.

It catalyses the reaction 6-deoxy-6-sulfo-D-fructose + D-glyceraldehyde 3-phosphate = 4-deoxy-4-sulfo-D-erythrose + D-xylulose 5-phosphate. It carries out the reaction 4-deoxy-4-sulfo-D-erythrulose + D-glyceraldehyde 3-phosphate = sulfoacetaldehyde + D-xylulose 5-phosphate. Its function is as follows. Part of the sulfo-TK pathway, a D-sulfoquinovose degradation pathway that produces 2-hydroxyethane-1-sulfonate (isethionate). Catalyzes two steps of the pathway: the formation of 4-deoxy-4-sulfoerythrose (SE) and xylulose 5-phosphate from 6-deoxy-6-sulfo-D-fructose (SF) and glyceraldehyde 3-phosphate, and the formation of sulfoacetaldehyde (SA) and xylulose 5-phosphate from 4-deoxy-4-sulfo-D-erythrulose (SEu) and glyceraldehyde 3-phosphate. This Clostridium sp. (strain MSTE9) protein is 6-deoxy-6-sulfo-D-fructose transketolase subunit SqwG.